The sequence spans 726 residues: Netrin-A (726 aa).

The signal sequence occupies residues 1–29; sequence MIRGILLLLLGTTRFSPIQCISNDVYFKM. Positions 46-312 constitute a Laminin N-terminal domain; it reads EPRACIPDFV…AISDFSVGGR (267 aa). 3 N-linked (GlcNAc...) asparagine glycosylation sites follow: Asn-108, Asn-112, and Asn-127. Intrachain disulfides connect Cys-313–Cys-322, Cys-315–Cys-332, Cys-334–Cys-343, Cys-346–Cys-366, Cys-369–Cys-378, Cys-371–Cys-396, Cys-399–Cys-408, Cys-411–Cys-429, Cys-432–Cys-444, Cys-434–Cys-451, Cys-453–Cys-462, and Cys-465–Cys-479. Laminin EGF-like domains follow at residues 313–368, 369–431, and 432–481; these read CKCN…ECKE, CNCN…VCKA, and CDCH…PCIK. Asn-445 carries N-linked (GlcNAc...) asparagine glycosylation. The tract at residues 490-516 is disordered; sequence LDTQNTAPEPDEPESSPGSGGDRNGAA. 2 cysteine pairs are disulfide-bonded: Cys-533-Cys-671 and Cys-549-Cys-725. The region spanning 533 to 725 is the NTR domain; it reads CGKCRVSTKR…KRFQRRARTC (193 aa). N-linked (GlcNAc...) asparagine glycans are attached at residues Asn-652 and Asn-679.

At the midline of developing CNS at the time of commissure formation and in different subsets of neurons, muscles, and epidermal patches.

The protein localises to the secreted. The protein resides in the extracellular space. It localises to the extracellular matrix. In terms of biological role, netrins control guidance of CNS commissural axons at the midline and peripheral motor axons to their target muscles. This chain is Netrin-A (NetA), found in Drosophila melanogaster (Fruit fly).